The primary structure comprises 331 residues: Putative heat stress transcription factor A-6a (331 aa).

Positions R135–E160 are disordered. Residues E156–A238 adopt a coiled-coil conformation. The tract at residues L162–L212 is hydrophobic repeat HR-A/B. Positions E230 to R235 match the Nuclear localization signal motif. The short motif at L246–L253 is the Nuclear export signal element. The short motif at D270–E279 is the AHA1 element. Residues A305 to E313 carry the AHA2 motif.

The protein belongs to the HSF family. Class A subfamily. Homotrimer. In terms of processing, exhibits temperature-dependent phosphorylation.

Its subcellular location is the cytoplasm. The protein localises to the nucleus. Its function is as follows. Transcriptional regulator that specifically binds DNA of heat shock promoter elements (HSE). This chain is Putative heat stress transcription factor A-6a (HSFA6A), found in Oryza sativa subsp. japonica (Rice).